The chain runs to 189 residues: MEALHKKIREEGIVLSDQVLKVDAFLNHQIDPALMKEIGDEFARLFADAGVTKIVTIEASGIAPAVMAGLNMGVPVIFARKHQSLTLTENLLTASVYSFTKQVESTVAISPRHLSSDDNVLIIDDFLANGKASQALISIIKQAGATVAGLGIVIEKSFQGGRAELDAQGYRVESLARVESLAGGVVTFK.

Xanthine contacts are provided by Leu20 and Asn27. 128–132 is a binding site for 5-phospho-alpha-D-ribose 1-diphosphate; that stretch reads ANGKA. Lys156 is a xanthine binding site.

It belongs to the purine/pyrimidine phosphoribosyltransferase family. Xpt subfamily. In terms of assembly, homodimer.

The protein localises to the cytoplasm. It carries out the reaction XMP + diphosphate = xanthine + 5-phospho-alpha-D-ribose 1-diphosphate. Its pathway is purine metabolism; XMP biosynthesis via salvage pathway; XMP from xanthine: step 1/1. Converts the preformed base xanthine, a product of nucleic acid breakdown, to xanthosine 5'-monophosphate (XMP), so it can be reused for RNA or DNA synthesis. This chain is Xanthine phosphoribosyltransferase, found in Pseudomonas syringae pv. syringae (strain B728a).